Consider the following 507-residue polypeptide: Probable cytosol aminopeptidase (507 aa).

Mn(2+)-binding residues include Lys-275 and Asp-280. Lys-287 is a catalytic residue. 3 residues coordinate Mn(2+): Asp-298, Asp-357, and Glu-359. Arg-361 is an active-site residue.

This sequence belongs to the peptidase M17 family. It depends on Mn(2+) as a cofactor.

The protein localises to the cytoplasm. The catalysed reaction is Release of an N-terminal amino acid, Xaa-|-Yaa-, in which Xaa is preferably Leu, but may be other amino acids including Pro although not Arg or Lys, and Yaa may be Pro. Amino acid amides and methyl esters are also readily hydrolyzed, but rates on arylamides are exceedingly low.. It carries out the reaction Release of an N-terminal amino acid, preferentially leucine, but not glutamic or aspartic acids.. Its function is as follows. Presumably involved in the processing and regular turnover of intracellular proteins. Catalyzes the removal of unsubstituted N-terminal amino acids from various peptides. This chain is Probable cytosol aminopeptidase, found in Rhodopirellula baltica (strain DSM 10527 / NCIMB 13988 / SH1).